We begin with the raw amino-acid sequence, 66 residues long: MVKPLHCLIGIVLFLAVLNAGNGFTLDRSASIERQEDSWPKISLFHGNQRKKRSEEKRFSDMEQTK.

The first 23 residues, Met1 to Gly23, serve as a signal peptide directing secretion. Positions Ser43–Lys66 are disordered. Residues Arg53 to Lys66 show a composition bias toward basic and acidic residues.

It belongs to the scoloptoxin-24 family. In terms of tissue distribution, expressed by the venom gland.

Its subcellular location is the secreted. The protein is U-scoloptoxin(24)-Er2a of Ethmostigmus rubripes (Giant centipede).